The chain runs to 330 residues: L-tryptophan isonitrile synthase AmbI2 (330 aa).

Belongs to the isocyanide synthase family.

It catalyses the reaction D-ribulose 5-phosphate + L-tryptophan = (2S)-3-(1H-indol-3-yl)-2-isocyanopropanoate + hydroxyacetone + formaldehyde + phosphate + H2O + H(+). In terms of biological role, involved in the biosynthesis of ambiguines, a family of hapalindole-type alkaloids. Responsible for the synthesis of the isonitrile group on tryptophan using ribulose 5-phosphate as the source of the carbon atom. This is L-tryptophan isonitrile synthase AmbI2 from Fischerella ambigua (strain UTEX 1903).